Consider the following 510-residue polypeptide: Sucrose transport protein SUC4 (510 aa).

Residues 1–34 (MATSDQDRRHRVTRNRPPIARPSTSSSRPVVSPP) form a disordered region. Residues 1–45 (MATSDQDRRHRVTRNRPPIARPSTSSSRPVVSPPRSKVSKRVLLR) are Cytoplasmic-facing. Residues 21–34 (RPSTSSSRPVVSPP) are compositionally biased toward low complexity. Serine 23 bears the Phosphoserine mark. The chain crosses the membrane as a helical span at residues 46–66 (VASVACGIQFGWALQLSLLTP). Residues 67 to 71 (YVQEL) are Extracellular-facing. A helical transmembrane segment spans residues 72 to 92 (GIPHAWASVIWLCGPLSGLFV). The Cytoplasmic portion of the chain corresponds to 93–111 (QPLVGHSSDRCTSKYGRRR). Residues 112–132 (PFIVAGAVAISISVMVIGHAA) form a helical membrane-spanning segment. The Extracellular portion of the chain corresponds to 133–148 (DIGWAFGDREGKIKPR). A helical membrane pass occupies residues 149–169 (AIVAFVLGFWILDVANNMTQG). At 170–187 (PCRALLADLTENDNRRTR) the chain is on the cytoplasmic side. The helical transmembrane segment at 188–208 (VANGYFSLFMAVGNVLGYATG) threads the bilayer. Residues 209–233 (SYNGWYKIFTFTKTVACNVECANLK) lie on the Extracellular side of the membrane. A helical membrane pass occupies residues 234–254 (SAFYIDVVFIAITTILSVSAA). At 255–291 (HEVPLASLASEAHGQTSGTDEAFLSEIFGTFRYFPGN) the chain is on the cytoplasmic side. The helical transmembrane segment at 292-312 (VWIILLVTALTWIGWFPFILF) threads the bilayer. At 313-335 (DTDWMGREIYGGEPNIGTSYSAG) the chain is on the extracellular side. The helical transmembrane segment at 336–356 (VSMGALGLMLNSVFLGITSVL) threads the bilayer. At 357–365 (MEKLCRKWG) the chain is on the cytoplasmic side. Residues 366-386 (AGFVWGISNILMAICFLGMII) traverse the membrane as a helical segment. The Extracellular portion of the chain corresponds to 387-402 (TSFVASHLGYIGHEQP). The helical transmembrane segment at 403 to 423 (PASIVFAAVLIFTILGIPLAI) threads the bilayer. Residues 424 to 443 (TYSVPYALISIRIESLGLGQ) are Cytoplasmic-facing. The chain crosses the membrane as a helical span at residues 444–464 (GLSLGVLNLAIVIPQVIVSVG). The Extracellular portion of the chain corresponds to 465-477 (SGPWDQLFGGGNS). A helical membrane pass occupies residues 478 to 498 (PALAVGAATGFIGGIVAILAL). Over 499 to 510 (PRTRIQKPIPLP) the chain is Cytoplasmic.

This sequence belongs to the glycoside-pentoside-hexuronide (GPH) cation symporter transporter (TC 2.A.2.4) family. In terms of assembly, homodimer. Interacts with SUC2 and SUC3. Expressed in sink tissues, mostly in minor veins of sink leaves. Localized in companion cells.

It localises to the cell membrane. It catalyses the reaction sucrose(out) + H(+)(out) = sucrose(in) + H(+)(in). It functions in the pathway glycan biosynthesis; sucrose metabolism. In terms of biological role, responsible for the transport of sucrose into the cell, with the concomitant uptake of protons (symport system). Can also transport maltose at a lesser rate. May also transport biotin. The polypeptide is Sucrose transport protein SUC4 (Arabidopsis thaliana (Mouse-ear cress)).